Reading from the N-terminus, the 135-residue chain is Salivary protein 15 (135 aa).

An N-terminal signal peptide occupies residues 1–21 (MESFVAMKVVCILFLVGVVAA). Asn-22 is a glycosylation site (N-linked (GlcNAc...) asparagine). The tract at residues 48-67 (PNYISNHQKLALKLLKICKD) is required for Borrelia OspC-binding. 2 N-linked (GlcNAc...) asparagine glycosylation sites follow: Asn-92 and Asn-104. The CD4-binding stretch occupies residues 116–135 (GPNGQTCAEKNKCVGHIPGC).

This sequence belongs to the salp15 family. Monomer. Interacts with host CD4. Interacts with host DC-SIGN (CD209). As to quaternary structure, (Microbial infection) Interacts with Borrelia outer surface protein C (OspC). Glycosylated. In terms of tissue distribution, expressed in salivary glands. Detected in host skin, at the site of natural inoculation.

It localises to the secreted. In terms of biological role, salivary tick protein that downregulates host immune system by binding to both dendritic cells, and CD4(+) T cells. Specifically binds to the CD4 coreceptor on T cells. This interaction prevents the activation of the Src kinase, Lck, and its downstream substrate Zap-70, and results in deficient activation of PLCgamma1, the repression of calcium fluxes triggered by T-cell antigen receptor (TCR) ligation, and a subsequent reduction in interleukin-2 production. This salivary protein also binds to DC-SIGN (CD209) on dendritic cells (DC) and activates the Raf-1 kinase/MEK signaling pathway that results in down-regulating expression of pro-inflammatory cytokines. Furthermore, it inhibits T cell proliferation induced by DCs. It also inhibits in vitro keratinocyte inflammation induced by Borrelia burgdorferi or by the major outer surface protein (OspC) of Borrelia. In addition, it downregulates chemokines and monocyte chemoattractant protein 1, as well as several antimicrobial peptides such as defensins, cathelicidin, psoriasin, and RNase 7. Apart from its immunomodulatory activities, it is also associated with protection of Borrelia spirochetes from antibody-mediated killing through its binding to OspC. In vivo, tests on different immune disease animal models show promising therapeutic results, e.g., in inhibiting HIV infection, experimental autoimmune encephalomyelitis, transplantation rejection, and asthma. Functionally, (Microbial infection) Protects Borrelia garinii (strains A87S and VSBP) from host complement-mediated killing. (Microbial infection) Partially protects Borrelia burgdorferi (strains VS215 and B31) from host complement-mediated killing. The sequence is that of Salivary protein 15 from Ixodes scapularis (Black-legged tick).